The chain runs to 439 residues: Histone acetyltransferase GCN5 (439 aa).

Basic and acidic residues-rich tracts occupy residues 1-28 and 39-59; these read MVTKHQIEEDHLDGATTDPEVKRVKLEN and ETNKQEGTDKENKGKFEKETE. The segment at 1 to 59 is disordered; it reads MVTKHQIEEDHLDGATTDPEVKRVKLENNVEEIQPEQAETNKQEGTDKENKGKFEKETE. In terms of domain architecture, N-acetyltransferase spans 100–255; it reads IEFRVVNNDN…GGTLMQCSML (156 aa). E173 (proton donor/acceptor) is an active-site residue. Residues 177-179, 184-190, and 216-219 contribute to the acetyl-CoA site; these read CAI, QVRGYGA, and YAIG. Positions 327–431 constitute a Bromo domain; it reads PKRGPHDAAI…KFFNNKVKEI (105 aa).

This sequence belongs to the acetyltransferase family. GCN5 subfamily. Component of the 1.8 MDa SAGA (Spt-Ada-Gcn5 acetyltransferase) complex, which is composed of 19 subunits TRA1, SPT7, TAF5, NGG1/ADA3, SGF73, SPT20/ADA5, SPT8, TAF12, TAF6, HFI1/ADA1, UBP8, GCN5, ADA2, SPT3, SGF29, TAF10, TAF9, SGF11 and SUS1. The SAGA complex is composed of 4 modules, namely the HAT (histone acetyltransferase) module (GCN5, ADA2, NGG1/ADA3 and SGF29), the DUB (deubiquitinating) module (UBP8, SGF11, SGF73 and SUS1), the core or TAF (TBP-associated factor) module (TAF5, TAF6, TAF9, TAF10 and TAF12), and the Tra1 or SPT (Suppressor of Ty) module (TRA1, HFI1/ADA1, SPT3, SPT7, SPT8 and SPT20/ADA5). The Tra1/SPT module binds activators, the core module recruits TBP (TATA-binding protein), the HAT module contains the histone H3 acetyltransferase GCN5, and the DUB module comprises the histone H2B deubiquitinase UBP8. Also identified in an altered form of SAGA, named SALSA (SAGA altered, Spt8 absent) or SLIK (SAGA-like) complex, which contains a C-terminal truncated form of SPT7 and is missing SPT8. However, it has been shown that the SAGA and SAGA-like SALSA/SLIK transcriptional coactivators are structurally and biochemically equivalent. Component of the 0.8 MDa ADA complex, a HAT complex distinct from SAGA, which at least consists of ADA2, NGG1/ADA3, AHC1, AHC2, SGF29 and GCN5. Component of an ADA/GCN5 complex that consists of HFI1/ADA1, ADA2, NGG1/ADA3, SPT20/ADA5 and GCN5 and probably is a subcomplex of SAGA.

The protein resides in the nucleus. It localises to the cytoplasm. The catalysed reaction is L-lysyl-[protein] + acetyl-CoA = N(6)-acetyl-L-lysyl-[protein] + CoA + H(+). It carries out the reaction (2E)-butenoyl-CoA + L-lysyl-[protein] = N(6)-(2E)-butenoyl-L-lysyl-[protein] + CoA + H(+). Functionally, histone acetyltransferase that acetylates histone H2B to form H2BK11ac and H2BK16ac, histone H3 to form H3K9ac, H3K14ac, H3K18ac, H3K23ac, H3K27ac and H3K36ac, with a lower preference histone H4 to form H4K8ac and H4K16ac, and contributes to H2A.Z acetylation. Acetylation of histones gives a specific tag for epigenetic transcription activation and elongation. Operates in concert with certain DNA-binding transcriptional activators such as GCN4 or HAP2/3/4. Its acetyltransferase activity seems to be dependent on the association in different multisubunit complexes. Component of the transcription coactivator SAGA complex. SAGA acts as a general cofactor required for essentially all RNA polymerase II transcription. At the promoters, SAGA is required for transcription pre-initiation complex (PIC) recruitment. It influences RNA polymerase II transcriptional activity through different activities such as TBP interaction (via core/TAF module) and promoter selectivity, interaction with transcription activators (via Tra1/SPT module), and chromatin modification through histone acetylation (via HAT module) and deubiquitination (via DUB module). SAGA preferentially acetylates histones H3 (to form H3K9ac, H3K14ac, H3K18ac and H3K23ac) and H2B and deubiquitinates histone H2B. SAGA interacts with DNA via upstream activating sequences (UASs). Also identified in a modified version of SAGA named SALSA or SLIK. The cleavage of SPT7 and the absence of the SPT8 subunit in SLIK neither drive any major conformational differences in its structure compared with SAGA, nor significantly affect HAT, DUB, or DNA-binding activities. Component of the ADA histone acetyltransferase complex, which preferentially acetylates nucleosomal histones H3 (to form H3K14ac and H3K18ac) and H2B. In addition to histone acetyltransferase, can use different acyl-CoA substrates, such as (2E)-butenoyl-CoA (crotonyl-CoA) and is able to mediate histone crotonylation. Controls the metaphase-to-anaphase transition and is required for correct chromosome segregation and centromere/kinetochore function in mitosis. May be involved in response to DNA damage by genotoxic agents. The chain is Histone acetyltransferase GCN5 from Saccharomyces cerevisiae (strain ATCC 204508 / S288c) (Baker's yeast).